The primary structure comprises 192 residues: Phosphoheptose isomerase (192 aa).

The SIS domain maps to 36-192 (CVDSLAAGGK…DQVEAVAAPA (157 aa)). Position 51–53 (51–53 (NGG)) interacts with substrate. Residues histidine 60 and glutamate 64 each coordinate Zn(2+). Substrate contacts are provided by residues glutamate 64, 93-94 (ND), 119-121 (TTS), serine 124, and glutamine 171. Zn(2+) contacts are provided by glutamine 171 and histidine 179.

The protein belongs to the SIS family. GmhA subfamily. In terms of assembly, homotetramer. Requires Zn(2+) as cofactor.

It localises to the cytoplasm. It catalyses the reaction 2 D-sedoheptulose 7-phosphate = D-glycero-alpha-D-manno-heptose 7-phosphate + D-glycero-beta-D-manno-heptose 7-phosphate. It functions in the pathway carbohydrate biosynthesis; D-glycero-D-manno-heptose 7-phosphate biosynthesis; D-glycero-alpha-D-manno-heptose 7-phosphate and D-glycero-beta-D-manno-heptose 7-phosphate from sedoheptulose 7-phosphate: step 1/1. In terms of biological role, catalyzes the isomerization of sedoheptulose 7-phosphate in D-glycero-D-manno-heptose 7-phosphate. The protein is Phosphoheptose isomerase of Paramagnetospirillum magneticum (strain ATCC 700264 / AMB-1) (Magnetospirillum magneticum).